Here is a 30-residue protein sequence, read N- to C-terminus: Alanine carboxypeptidase (30 aa).

It carries out the reaction Release of a C-terminal alanine from a peptide or a variety of pteroyl or acyl groups.. In Geobacillus stearothermophilus (Bacillus stearothermophilus), this protein is Alanine carboxypeptidase.